We begin with the raw amino-acid sequence, 354 residues long: MSERIRKIIHVDMDCFYAAVEMRDNPNYRDIALAVGGHEKQRGVISTCNYEARKFGVRSAMPTARALQLCPHLLVVPGRMHIYKQVSLQIRAIFERYTSLIEPLSLDEAYLDVTDATACRGSATLIAESIRNDIRNELGLTASAGIAPIKFLAKVASDMNKPNGQFVIPPEKVQEVVDKLPLEKIPGVGKVSLEKLHQAGFYLCEDIKNSDYRELLRQFGRQGASLWKRSHGIDDREVVVERERKSVGVERTFSQNISTYDECWQVIEEKLYPELEKRLERASPDKSIIKQGIKVKFADFQLTTIEHIHPQLELEDFKLLLKDILKRQNGREIRLLGLSVMLKPEEQARQLSFF.

In terms of domain architecture, UmuC spans 8–189 (IIHVDMDCFY…LPLEKIPGVG (182 aa)). Mg(2+) is bound by residues D12 and D107. Residue E108 is part of the active site.

It belongs to the DNA polymerase type-Y family. Monomer. Mg(2+) is required as a cofactor.

It localises to the cytoplasm. It carries out the reaction DNA(n) + a 2'-deoxyribonucleoside 5'-triphosphate = DNA(n+1) + diphosphate. In terms of biological role, poorly processive, error-prone DNA polymerase involved in untargeted mutagenesis. Copies undamaged DNA at stalled replication forks, which arise in vivo from mismatched or misaligned primer ends. These misaligned primers can be extended by PolIV. Exhibits no 3'-5' exonuclease (proofreading) activity. May be involved in translesional synthesis, in conjunction with the beta clamp from PolIII. The chain is DNA polymerase IV from Vibrio parahaemolyticus serotype O3:K6 (strain RIMD 2210633).